A 344-amino-acid polypeptide reads, in one-letter code: UDP-glycosyltransferase 73C4 (344 aa).

UDP-alpha-D-glucose-binding positions include serine 145, 202–203 (WA), 220–228 (HCGWNSSLE), and 242–245 (FAEQ).

Belongs to the UDP-glycosyltransferase family. In terms of tissue distribution, expressed in flowers and fruits.

The protein resides in the cytoplasm. The protein localises to the nucleus. Functionally, probable glucosyltransferase that cannot glycosylate abscisic acid (ABA) and auxin (IAA). The chain is UDP-glycosyltransferase 73C4 from Solanum lycopersicum (Tomato).